The sequence spans 246 residues: Bidirectional sugar transporter SWEET3a (246 aa).

Over 1 to 6 the chain is Extracellular; it reads MFPDIR. A helical membrane pass occupies residues 7-27; it reads FIVGIIGSVACMLLYSAPILT. The 90-residue stretch at 7–96 folds into the MtN3/slv 1 domain; sequence FIVGIIGSVA…ISIYVWFAPR (90 aa). Residues 28-42 are Cytoplasmic-facing; that stretch reads FKRVIKKASVEEFSC. The helical transmembrane segment at 43–63 threads the bilayer; the sequence is IPYILALFSCLTYSWYGFPVV. The Extracellular segment spans residues 64–74; the sequence is SYGWENMTVCS. The N-linked (GlcNAc...) asparagine glycan is linked to asparagine 69. The chain crosses the membrane as a helical span at residues 75–95; that stretch reads ISSLGVLFEGTFISIYVWFAP. The Cytoplasmic segment spans residues 96–101; the sequence is RGKKKQ. Residues 102-122 form a helical membrane-spanning segment; it reads VMLMASLILAVFCMTVFFSSF. At 123-131 the chain is on the extracellular side; sequence SIHNHHIRK. The chain crosses the membrane as a helical span at residues 132–152; the sequence is VFVGSVGLVSSISMYGSPLVA. A MtN3/slv 2 domain is found at 133–217; sequence FVGSVGLVSS…VVYCIYSKCK (85 aa). Residues 153–166 lie on the Cytoplasmic side of the membrane; that stretch reads MKQVIRTKSVEFMP. A helical membrane pass occupies residues 167–187; sequence FYLSLFTLFTSLTWMAYGVIG. Over 188-191 the chain is Extracellular; sequence RDPF. The chain crosses the membrane as a helical span at residues 192–212; that stretch reads IATPNCIGSIMGILQLVVYCI. Residues 213-246 lie on the Cytoplasmic side of the membrane; the sequence is YSKCKEAPKVLHDIEQANVVKIPTSHVDTKGHNP.

The protein belongs to the SWEET sugar transporter family. As to quaternary structure, forms homooligomers and/or heterooligomers.

Its subcellular location is the cell membrane. In terms of biological role, mediates both low-affinity uptake and efflux of sugar across the plasma membrane. This is Bidirectional sugar transporter SWEET3a (SWEET3A) from Oryza sativa subsp. japonica (Rice).